The following is a 392-amino-acid chain: CCA-adding enzyme (392 aa).

Residues Ser45 and Lys48 each coordinate ATP. Ser45 and Lys48 together coordinate CTP. The Mg(2+) site is built by Asp55, Asp57, and Glu106. Positions 129, 148, and 157 each coordinate ATP. His129, Lys148, and Tyr157 together coordinate CTP.

The protein belongs to the tRNA nucleotidyltransferase/poly(A) polymerase family. Archaeal CCA-adding enzyme subfamily. In terms of assembly, homodimer. Mg(2+) serves as cofactor.

The enzyme catalyses a tRNA precursor + 2 CTP + ATP = a tRNA with a 3' CCA end + 3 diphosphate. It catalyses the reaction a tRNA with a 3' CCA end + 2 CTP + ATP = a tRNA with a 3' CCACCA end + 3 diphosphate. Catalyzes the addition and repair of the essential 3'-terminal CCA sequence in tRNAs without using a nucleic acid template. Adds these three nucleotides in the order of C, C, and A to the tRNA nucleotide-73, using CTP and ATP as substrates and producing inorganic pyrophosphate. tRNA 3'-terminal CCA addition is required both for tRNA processing and repair. Also involved in tRNA surveillance by mediating tandem CCA addition to generate a CCACCA at the 3' terminus of unstable tRNAs. While stable tRNAs receive only 3'-terminal CCA, unstable tRNAs are marked with CCACCA and rapidly degraded. In Nanoarchaeum equitans (strain Kin4-M), this protein is CCA-adding enzyme.